The chain runs to 417 residues: D-amino acid dehydrogenase (417 aa).

An FAD-binding site is contributed by 3–17 (VIVLGSGVIGVTAAW).

It belongs to the DadA oxidoreductase family. FAD serves as cofactor.

The enzyme catalyses a D-alpha-amino acid + A + H2O = a 2-oxocarboxylate + AH2 + NH4(+). The protein operates within amino-acid degradation; D-alanine degradation; NH(3) and pyruvate from D-alanine: step 1/1. Its function is as follows. Oxidative deamination of D-amino acids. In Methylobacillus flagellatus (strain ATCC 51484 / DSM 6875 / VKM B-1610 / KT), this protein is D-amino acid dehydrogenase.